We begin with the raw amino-acid sequence, 998 residues long: Collagen alpha-1(I) chain (998 aa).

The tract at residues 1 to 998 (SYGYDEKGGV…GPPGPPGPPG (998 aa)) is disordered. The segment covering 9–22 (GVSVPGPMGPSGPR) has biased composition (low complexity). 4-hydroxyproline occurs at positions 25, 28, 30, 39, 42, 45, 59, 74, 80, 89, and 95. The span at 62 to 76 (NGDDGEAGKPGRPGE) shows a compositional bias: basic and acidic residues. Lys98 is subject to 5-hydroxylysine; alternate. Residue Lys98 is glycosylated (O-linked (Gal...) hydroxylysine; alternate). Residue Ser104 is modified to Phosphoserine. Residues 112 to 128 (DAGPAGPKGEPGSPGEN) show a composition bias toward low complexity. Pro122, Pro125, Pro131, Pro140, Pro146, Pro167, Pro176, Pro179, Pro206, Pro209, Pro221, Pro227, Pro236, Pro242, Pro245, and Pro260 each carry 4-hydroxyproline. A compositionally biased stretch (low complexity) spans 146–164 (PGASGPAGARGNDGATGAA). Residues 166 to 178 (PPGPTGPAGPPGF) are compositionally biased toward pro residues. Low complexity predominate over residues 212 to 251 (AGAAGPAGNPGADGQPGAKGANGAPGIAGAPGFPGARGPS). Lys263 carries the 5-hydroxylysine modification. Residues Pro269, Pro272, Pro284, Pro293, Pro308, Pro314, Pro323, and Pro329 each carry the 4-hydroxyproline modification. Gly residues predominate over residues 318-327 (GERGGPGSRG). Residue Lys338 is modified to 5-hydroxylysine. 25 positions are modified to 4-hydroxyproline: Pro347, Pro356, Pro362, Pro368, Pro377, Pro380, Pro389, Pro398, Pro404, Pro416, Pro425, Pro434, Pro437, Pro455, Pro472, Pro478, Pro484, Pro490, Pro496, Pro502, Pro514, Pro523, Pro537, Pro543, and Pro552. The segment covering 371–397 (KGLTGSPGSPGPDGKTGPPGPAGQDGR) has biased composition (low complexity). Residues 406 to 425 (ARGQAGVMGFPGPKGAAGEP) show a composition bias toward low complexity. Low complexity predominate over residues 484–493 (PGEAGKPGEQ). 5-hydroxylysine is present on Lys564. 4-hydroxyproline is present on residues Pro570, Pro585, and Pro591. Residues 597-611 (SGPSGPAGPTGARGA) are compositionally biased toward low complexity. Position 600 is a phosphoserine (Ser600). 4-hydroxyproline occurs at positions 612, 618, 621, 630, 636, 654, 663, and 672. The segment covering 624 to 651 (AGFAGPPGADGQPGAKGEPGDAGAKGDA) has biased composition (low complexity). Pro residues predominate over residues 653–665 (PPGPAGPTGPPGP). The residue at position 675 (Lys675) is a 5-hydroxylysine. Low complexity predominate over residues 680 to 696 (SAGPPGATGFPGAAGRV). Residues Pro684 and Pro690 each carry the 4-hydroxyproline modification. Pro698 is subject to 3-hydroxyproline. Residues Pro699, Pro708, Pro711, Pro732, Pro741, Pro749, Pro758, Pro776, Pro785, Pro788, Pro794, Pro809, Pro815, Pro821, Pro830, and Pro836 each carry the 4-hydroxyproline modification. Residues 725-734 (ETGPAGRPGE) are compositionally biased toward low complexity. The segment covering 746–758 (KGSPGADGPAGAP) has biased composition (low complexity). A compositionally biased stretch (pro residues) spans 808-818 (PPGPMGPPGLA). A 5-hydroxylysine modification is found at Lys845. A compositionally biased stretch (pro residues) spans 853-868 (PGPPGAPGAPGAPGPV). 4-hydroxyproline occurs at positions 856, 859, and 862. Residues 889-903 (AGPAGARGPAGPQGP) show a composition bias toward low complexity. Basic and acidic residues predominate over residues 904–918 (RGDKGETGEQGDRGI). Lys907 is modified (5-hydroxylysine). At Lys919 the chain carries 5-hydroxylysine; alternate. The O-linked (Gal...) hydroxylysine; alternate glycan is linked to Lys919. A 4-hydroxyproline mark is found at Pro934, Pro937, Pro955, and Pro970. The span at 937–970 (PGEQGPSGASGPAGPRGPPGSAGSPGKDGLNGLP) shows a compositional bias: low complexity. A 3-hydroxyproline modification is found at Pro975. Pro976 is subject to 4-hydroxyproline. Positions 988 to 998 (VGPPGPPGPPG) are enriched in pro residues. Pro990 carries the 3-hydroxyproline modification. 4-hydroxyproline is present on Pro991. Pro993 carries the 3-hydroxyproline modification. At Pro994 the chain carries 4-hydroxyproline. The residue at position 996 (Pro996) is a 3-hydroxyproline. Pro997 is subject to 4-hydroxyproline.

Belongs to the fibrillar collagen family. In terms of assembly, trimers of one alpha 2(I) and two alpha 1(I) chains. Contains mostly 4-hydroxyproline. Proline residues at the third position of the tripeptide repeating unit (G-X-Y) are hydroxylated in some or all of the chains. In terms of processing, contains 3-hydroxyproline at a few sites. This modification occurs on the first proline residue in the sequence motif Gly-Pro-Hyp, where Hyp is 4-hydroxyproline. Post-translationally, lysine residues at the third position of the tripeptide repeating unit (G-X-Y) are 5-hydroxylated in some or all of the chains. O-glycosylated on hydroxylated lysine residues. The O-linked glycan consists of a Glc-Gal disaccharide. In terms of tissue distribution, expressed in bones.

Its subcellular location is the secreted. It is found in the extracellular space. The protein localises to the extracellular matrix. Its function is as follows. Type I collagen is a member of group I collagen (fibrillar forming collagen). The polypeptide is Collagen alpha-1(I) chain (Nothrotheriops shastensis (Shasta ground sloth)).